The following is a 549-amino-acid chain: Lipase 3 (549 aa).

Positions 1–15 are cleaved as a signal peptide; that stretch reads MKLALALSLIASVAA. Cysteines 75 and 112 form a disulfide. The active-site Acyl-ester intermediate is the S224. An intrachain disulfide couples C283 to C292. A glycan (N-linked (GlcNAc...) asparagine) is linked at N329. E356 (charge relay system) is an active-site residue. Residue N366 is glycosylated (N-linked (GlcNAc...) asparagine). Catalysis depends on H464, which acts as the Charge relay system.

This sequence belongs to the type-B carboxylesterase/lipase family. As to quaternary structure, monomer and homodimer.

The catalysed reaction is a triacylglycerol + H2O = a diacylglycerol + a fatty acid + H(+). The chain is Lipase 3 (LIP3) from Diutina rugosa (Yeast).